We begin with the raw amino-acid sequence, 384 residues long: F-box only protein 5 (384 aa).

The segment at 25-67 is disordered; it reads EVKGHKVSPRKTGALSLRSPAATNVSTPLESRSKGPHNKENYQ. The segment covering 45-54 has biased composition (polar residues); it reads AATNVSTPLE. A compositionally biased stretch (basic and acidic residues) spans 55–67; it reads SRSKGPHNKENYQ. One can recognise an F-box domain in the interval 187–234; it reads CKLMRKDMRHILARILGLLGDCDLISCTKVSRTWRKIICQDQLALQRW. The ZBR-type zinc finger occupies 311 to 359; the sequence is SLRRCSRCSSPARFDAVMQRAVCTRISCAFEFCTLCQSAFHDSTPCRNT. Cys-315, Cys-318, Cys-333, Cys-338, Cys-343, Cys-346, His-351, and Cys-356 together coordinate Zn(2+).

Part of a SCF (SKP1-cullin-F-box) protein ligase complex.

It is found in the nucleus. The protein localises to the cytoplasm. It functions in the pathway protein modification; protein ubiquitination. In terms of biological role, during embryonic development, regulates the integrity of the genome and therefore the cell cycle progression by preventing rereplication through an APC-Cdh1-dependent mechanism. In Danio rerio (Zebrafish), this protein is F-box only protein 5.